We begin with the raw amino-acid sequence, 424 residues long: UPF0597 protein Sbal_3070 (424 aa).

It belongs to the UPF0597 family.

The protein is UPF0597 protein Sbal_3070 of Shewanella baltica (strain OS155 / ATCC BAA-1091).